A 141-amino-acid polypeptide reads, in one-letter code: Large ribosomal subunit protein uL11B/uL11C (141 aa).

Belongs to the universal ribosomal protein uL11 family. Part of the ribosomal stalk of the 50S ribosomal subunit. Interacts with L10 and the large rRNA to form the base of the stalk. L10 forms an elongated spine to which L12 dimers bind in a sequential fashion forming a multimeric L10(L12)X complex. In terms of processing, one or more lysine residues are methylated.

Forms part of the ribosomal stalk which helps the ribosome interact with GTP-bound translation factors. This is Large ribosomal subunit protein uL11B/uL11C from Bacillus cereus (strain ATCC 14579 / DSM 31 / CCUG 7414 / JCM 2152 / NBRC 15305 / NCIMB 9373 / NCTC 2599 / NRRL B-3711).